Consider the following 701-residue polypeptide: Methionine--tRNA ligase (701 aa).

The 'HIGH' region motif lies at 13 to 23 (PYANGSIHLGH). Residues Cys144, Cys147, Cys157, and Cys160 each contribute to the Zn(2+) site. Residues 336 to 340 (KMSKS) carry the 'KMSKS' region motif. Lys339 provides a ligand contact to ATP. Residues 600–701 (DFSKIDLRIA…SGAQPGMRVK (102 aa)) enclose the tRNA-binding domain.

This sequence belongs to the class-I aminoacyl-tRNA synthetase family. MetG type 1 subfamily. In terms of assembly, homodimer. Zn(2+) is required as a cofactor.

The protein localises to the cytoplasm. It catalyses the reaction tRNA(Met) + L-methionine + ATP = L-methionyl-tRNA(Met) + AMP + diphosphate. Is required not only for elongation of protein synthesis but also for the initiation of all mRNA translation through initiator tRNA(fMet) aminoacylation. This Nitrosomonas eutropha (strain DSM 101675 / C91 / Nm57) protein is Methionine--tRNA ligase.